The primary structure comprises 275 residues: 2,3,4,5-tetrahydropyridine-2,6-dicarboxylate N-succinyltransferase (275 aa).

It belongs to the transferase hexapeptide repeat family.

It localises to the cytoplasm. It carries out the reaction (S)-2,3,4,5-tetrahydrodipicolinate + succinyl-CoA + H2O = (S)-2-succinylamino-6-oxoheptanedioate + CoA. The protein operates within amino-acid biosynthesis; L-lysine biosynthesis via DAP pathway; LL-2,6-diaminopimelate from (S)-tetrahydrodipicolinate (succinylase route): step 1/3. The polypeptide is 2,3,4,5-tetrahydropyridine-2,6-dicarboxylate N-succinyltransferase (Paraburkholderia phytofirmans (strain DSM 17436 / LMG 22146 / PsJN) (Burkholderia phytofirmans)).